Here is a 319-residue protein sequence, read N- to C-terminus: Thioredoxin reductase (319 aa).

Residue 36 to 43 (TGINKGGQ) participates in FAD binding. Residues Cys-136 and Cys-139 are joined by a disulfide bond. An FAD-binding site is contributed by 288–297 (DVIDHVYRQA).

The protein belongs to the class-II pyridine nucleotide-disulfide oxidoreductase family. As to quaternary structure, homodimer. FAD serves as cofactor.

The protein resides in the cytoplasm. It catalyses the reaction [thioredoxin]-dithiol + NADP(+) = [thioredoxin]-disulfide + NADPH + H(+). The protein is Thioredoxin reductase (trxB) of Buchnera aphidicola subsp. Schizaphis graminum (strain Sg).